Consider the following 66-residue polypeptide: MKAADVRALSADQLKEELAKLKKEQFNLRFQKATGQLEKSSRIDEVRKDIARIKTIARQKAAEAKA.

Belongs to the universal ribosomal protein uL29 family.

The chain is Large ribosomal subunit protein uL29 from Sinorhizobium fredii (strain NBRC 101917 / NGR234).